The following is a 393-amino-acid chain: Succinate--CoA ligase [ADP-forming] subunit beta (393 aa).

Positions 9 to 242 (KELFAKHGVP…RAATDPLEWK (234 aa)) constitute an ATP-grasp domain. ATP is bound by residues lysine 45, 52–54 (GRG), serine 94, and glutamate 99. Mg(2+)-binding residues include asparagine 191 and aspartate 211. Substrate-binding positions include asparagine 262 and 324-326 (GIT).

Belongs to the succinate/malate CoA ligase beta subunit family. In terms of assembly, heterotetramer of two alpha and two beta subunits. It depends on Mg(2+) as a cofactor.

The catalysed reaction is succinate + ATP + CoA = succinyl-CoA + ADP + phosphate. It catalyses the reaction GTP + succinate + CoA = succinyl-CoA + GDP + phosphate. It functions in the pathway carbohydrate metabolism; tricarboxylic acid cycle; succinate from succinyl-CoA (ligase route): step 1/1. Functionally, succinyl-CoA synthetase functions in the citric acid cycle (TCA), coupling the hydrolysis of succinyl-CoA to the synthesis of either ATP or GTP and thus represents the only step of substrate-level phosphorylation in the TCA. The beta subunit provides nucleotide specificity of the enzyme and binds the substrate succinate, while the binding sites for coenzyme A and phosphate are found in the alpha subunit. The sequence is that of Succinate--CoA ligase [ADP-forming] subunit beta from Mycobacterium leprae (strain Br4923).